Consider the following 210-residue polypeptide: Thymidylate kinase (210 aa).

ATP is bound at residue glycine 9–threonine 16.

This sequence belongs to the thymidylate kinase family.

It catalyses the reaction dTMP + ATP = dTDP + ADP. In terms of biological role, phosphorylation of dTMP to form dTDP in both de novo and salvage pathways of dTTP synthesis. The protein is Thymidylate kinase of Thermomicrobium roseum (strain ATCC 27502 / DSM 5159 / P-2).